The primary structure comprises 570 residues: Hydroxylamine reductase (570 aa).

C5, C8, C17, and C23 together coordinate [4Fe-4S] cluster. Positions 266, 290, 334, 425, 453, 478, 513, and 515 each coordinate hybrid [4Fe-2O-2S] cluster. Position 425 is a cysteine persulfide (C425).

It belongs to the HCP family. Requires [4Fe-4S] cluster as cofactor. Hybrid [4Fe-2O-2S] cluster is required as a cofactor.

The protein localises to the cytoplasm. It carries out the reaction A + NH4(+) + H2O = hydroxylamine + AH2 + H(+). Its function is as follows. Catalyzes the reduction of hydroxylamine to form NH(3) and H(2)O. The polypeptide is Hydroxylamine reductase (Clostridium botulinum (strain ATCC 19397 / Type A)).